A 941-amino-acid chain; its full sequence is Protocadherin alpha-12 (941 aa).

Positions 1–29 (MVIIGPRGPGSQRLLLSLLLLAAWEVGSG) are cleaved as a signal peptide. Cadherin domains follow at residues 30–133 (QLHY…PPVF), 134–242 (RERE…GPAF), 243–350 (DKPS…VPEV), 351–455 (MVTS…APAF), 456–565 (AQPE…APAL), and 581–678 (VPRS…APKT). The Extracellular segment spans residues 30-697 (QLHYSVYEEA…DPEAALVDIN (668 aa)). N-linked (GlcNAc...) asparagine glycosylation is found at Asn-257 and Asn-265. A glycan (N-linked (GlcNAc...) asparagine) is linked at Asn-548. The chain crosses the membrane as a helical span at residues 698 to 718 (VYLIIAICAVSSLLVLTLLLY). Residues 719 to 941 (TALRCSAPPT…GNSTTDNSDQ (223 aa)) are Cytoplasmic-facing. PXXP repeat units follow at residues 734-737 (PGKP), 790-793 (PRQP), 823-826 (PGGP), 863-866 (GPGN), and 882-885 (PGSP). The 5 X 4 AA repeats of P-X-X-P stretch occupies residues 734–885 (PGKPTLVCSS…PDKFIIPGSP (152 aa)). The tract at residues 818–941 (ILRAGPGGPD…GNSTTDNSDQ (124 aa)) is disordered. Over residues 900-914 (DKSDFITFGKKEETK) the composition is skewed to basic and acidic residues.

It localises to the cell membrane. Its function is as follows. Potential calcium-dependent cell-adhesion protein. May be involved in the establishment and maintenance of specific neuronal connections in the brain. The chain is Protocadherin alpha-12 (PCDHA12) from Pan troglodytes (Chimpanzee).